Reading from the N-terminus, the 156-residue chain is Cyanate hydratase (156 aa).

Residues Arg96, Glu99, and Ser122 contribute to the active site.

This sequence belongs to the cyanase family.

The catalysed reaction is cyanate + hydrogencarbonate + 3 H(+) = NH4(+) + 2 CO2. In terms of biological role, catalyzes the reaction of cyanate with bicarbonate to produce ammonia and carbon dioxide. This chain is Cyanate hydratase, found in Burkholderia ambifaria (strain MC40-6).